We begin with the raw amino-acid sequence, 142 residues long: Large ribosomal subunit protein uL16 (142 aa).

This sequence belongs to the universal ribosomal protein uL16 family. As to quaternary structure, part of the 50S ribosomal subunit.

Binds 23S rRNA and is also seen to make contacts with the A and possibly P site tRNAs. This is Large ribosomal subunit protein uL16 from Mycoplasmopsis pulmonis (strain UAB CTIP) (Mycoplasma pulmonis).